We begin with the raw amino-acid sequence, 334 residues long: Glyceraldehyde-3-phosphate dehydrogenase 1 (334 aa).

NAD(+) is bound by residues 12-13 (RI), Asp35, and Arg79. D-glyceraldehyde 3-phosphate is bound by residues 152 to 154 (SCT), Thr183, Arg198, 211 to 212 (SG), and Arg234. Cys153 serves as the catalytic Nucleophile. An NAD(+)-binding site is contributed by Asn315.

Belongs to the glyceraldehyde-3-phosphate dehydrogenase family. In terms of assembly, homotetramer.

Its subcellular location is the cytoplasm. It carries out the reaction D-glyceraldehyde 3-phosphate + phosphate + NAD(+) = (2R)-3-phospho-glyceroyl phosphate + NADH + H(+). It functions in the pathway carbohydrate degradation; glycolysis; pyruvate from D-glyceraldehyde 3-phosphate: step 1/5. Its activity is regulated as follows. Resistant to pentalenolactone. Catalyzes the oxidative phosphorylation of glyceraldehyde 3-phosphate (G3P) to 1,3-bisphosphoglycerate (BPG) using the cofactor NAD. The first reaction step involves the formation of a hemiacetal intermediate between G3P and a cysteine residue, and this hemiacetal intermediate is then oxidized to a thioester, with concomitant reduction of NAD to NADH. The reduced NADH is then exchanged with the second NAD, and the thioester is attacked by a nucleophilic inorganic phosphate to produce BPG. The protein is Glyceraldehyde-3-phosphate dehydrogenase 1 (gap1) of Streptomyces avermitilis (strain ATCC 31267 / DSM 46492 / JCM 5070 / NBRC 14893 / NCIMB 12804 / NRRL 8165 / MA-4680).